We begin with the raw amino-acid sequence, 156 residues long: MPRRRVIGQRKILPDPKFGSELLAKFVNILMVDGKKSTAESIVYSALETLAQRSGKSELEALEVALENVRPTVEVKSRRVGGSTYQVPVEVRPVRRNALAMRWIVEAARKRGDKSMALRLANELSDAAENKGTAVKKREDVHRMAEANKAFAHYRW.

This sequence belongs to the universal ribosomal protein uS7 family. As to quaternary structure, part of the 30S ribosomal subunit. Contacts proteins S9 and S11.

In terms of biological role, one of the primary rRNA binding proteins, it binds directly to 16S rRNA where it nucleates assembly of the head domain of the 30S subunit. Is located at the subunit interface close to the decoding center, probably blocks exit of the E-site tRNA. The sequence is that of Small ribosomal subunit protein uS7 from Shigella dysenteriae serotype 1 (strain Sd197).